The following is a 315-amino-acid chain: Ribosomal protein L11 methyltransferase (315 aa).

Residues Thr152, Gly185, Asp207, and Asn249 each contribute to the S-adenosyl-L-methionine site.

It belongs to the methyltransferase superfamily. PrmA family.

The protein localises to the cytoplasm. The enzyme catalyses L-lysyl-[protein] + 3 S-adenosyl-L-methionine = N(6),N(6),N(6)-trimethyl-L-lysyl-[protein] + 3 S-adenosyl-L-homocysteine + 3 H(+). In terms of biological role, methylates ribosomal protein L11. This is Ribosomal protein L11 methyltransferase from Geotalea uraniireducens (strain Rf4) (Geobacter uraniireducens).